A 249-amino-acid polypeptide reads, in one-letter code: Isoamyl acetate-hydrolyzing esterase 1 homolog (249 aa).

Catalysis depends on serine 24, which acts as the Nucleophile. An N6-succinyllysine modification is found at lysine 63. Aspartate 197 (proton donor) is an active-site residue. The Proton acceptor role is filled by histidine 200.

It belongs to the 'GDSL' lipolytic enzyme family. IAH1 subfamily.

In terms of biological role, probable lipase. The sequence is that of Isoamyl acetate-hydrolyzing esterase 1 homolog (IAH1) from Bos taurus (Bovine).